A 413-amino-acid polypeptide reads, in one-letter code: Ferredoxin--NADP reductase (413 aa).

The residue at position 1 (M1) is an N-acetylmethionine. Residues 18–76 form the CpcD-like domain; that stretch reads NRLFVYEVIGLSQSTMTDGLDYPIRRSGSTFITVPLKRMNQEMRRITRMGGKIVSIKPL. The interval 74–120 is disordered; the sequence is KPLEGDSPLPHTEGIAKPSQSEGSGSEAVANPAPESNKTMTTTPKEK. Residues 107 to 116 are compositionally biased toward polar residues; it reads PESNKTMTTT. The region spanning 133–256 is the FAD-binding FR-type domain; sequence KTPYIGKVLE…TGPVGKEMLL (124 aa). FAD is bound by residues 192 to 195, 213 to 215, Y219, 230 to 232, and T271; these read RLYS, CVR, and VCS. Residues S195 and R215 each coordinate NADP(+). NADP(+) contacts are provided by residues T271, 303–304, 333–334, 343–347, 372–373, and E411; these read IP, SR, RMYIQ, and GL.

This sequence belongs to the ferredoxin--NADP reductase type 1 family. In terms of assembly, purifies with both the classic phycobilisome (PBS) supercomplex (CpcG-PBS) and a photosystem I-associated PBS called CpcL-PBS; it accumulates to a higher level in CpcL-PBS. In both PBS it can be cross-linked to both phycocyanin subunits. Requires FAD as cofactor. Acetylated at the N-terminus; 6% of protein in CpcG-PBS and 12% of protein in CpcL-PBS is acetylated.

It localises to the cellular thylakoid membrane. The catalysed reaction is 2 reduced [2Fe-2S]-[ferredoxin] + NADP(+) + H(+) = 2 oxidized [2Fe-2S]-[ferredoxin] + NADPH. In Synechocystis sp. (strain ATCC 27184 / PCC 6803 / Kazusa), this protein is Ferredoxin--NADP reductase.